A 438-amino-acid polypeptide reads, in one-letter code: Glyceraldehyde-3-phosphate dehydrogenase B, chloroplastic (438 aa).

The transit peptide at 1–53 (CLSKKFEVAEFAGLRSSGCVTFSNKESSFFDVVSAQLTPKTTRSTPVKGETVA) directs the protein to the chloroplast. NADP(+) is bound by residues 64–65 (RI), Asp88, and Arg133. Residues 207–209 (SCT), Thr238, Arg253, 266–267 (TG), and Arg289 each bind D-glyceraldehyde 3-phosphate. Cys208 serves as the catalytic Nucleophile. Asn372 serves as a coordination point for NADP(+).

The protein belongs to the glyceraldehyde-3-phosphate dehydrogenase family. In terms of assembly, tetramer of either four A chains (GAPDH 2) or two A and two B chains (GAPDH 1).

It localises to the plastid. The protein localises to the chloroplast. The catalysed reaction is D-glyceraldehyde 3-phosphate + phosphate + NADP(+) = (2R)-3-phospho-glyceroyl phosphate + NADPH + H(+). It functions in the pathway carbohydrate biosynthesis; Calvin cycle. The chain is Glyceraldehyde-3-phosphate dehydrogenase B, chloroplastic (GAPB) from Nicotiana tabacum (Common tobacco).